The following is a 411-amino-acid chain: Elongation factor 1-gamma (411 aa).

Positions 3–84 constitute a GST N-terminal domain; that stretch reads LTLWSGVNPE…HIARLDRSGG (82 aa). The 127-residue stretch at 90–216 folds into the GST C-terminal domain; sequence TPLEGSQVDM…QGATFGAREG (127 aa). Residues 212–265 are disordered; that stretch reads GAREGGAKGQGRGCARPGREEAERAAAAADGAEEEDEAPREKKKPNPLDELPPS. Residues 214 to 223 are compositionally biased toward gly residues; sequence REGGAKGQGR. The EF-1-gamma C-terminal domain maps to 255-411; it reads KPNPLDELPP…RPVLEGRVFK (157 aa).

As to quaternary structure, EF-1 is composed of four subunits: alpha, beta, delta, and gamma.

In terms of biological role, probably plays a role in anchoring the complex to other cellular components. This Trypanosoma cruzi protein is Elongation factor 1-gamma.